A 383-amino-acid polypeptide reads, in one-letter code: Delta(12) acyl-lipid conjugase (11E,13E-forming) (383 aa).

The disordered stretch occupies residues 1–30 (MGEVGPTNRTKTKLDKQQESENRVPHEPPP). The span at 12–26 (TKLDKQQESENRVPH) shows a compositional bias: basic and acidic residues. 2 helical membrane-spanning segments follow: residues 56-76 (VIHD…YIPM) and 84-104 (VAWP…LVLG). The short motif at 105 to 109 (HECGH) is the Histidine box-1 element. Residues 141-145 (HRRHH) carry the Histidine box-2 motif. 3 helical membrane-spanning segments follow: residues 179-199 (FLMI…FNAN), 225-245 (VIAS…IALA), and 249-269 (VWLI…IVLI). The short motif at 315–319 (HLVHH) is the Histidine box-3 element.

This sequence belongs to the fatty acid desaturase type 1 family. Expressed in developing seeds, but not in leaves.

It is found in the membrane. The enzyme catalyses a (9Z,12Z)-octadecadienoyl-containing glycerolipid + 2 Fe(II)-[cytochrome b5] + O2 + 2 H(+) = a (9Z,11E,13E)-octadecatrienoyl-containing glycerolipid + 2 Fe(III)-[cytochrome b5] + 2 H2O. It carries out the reaction (9Z,12Z,15Z)-octadecatrienoyl-containing glycerolipid + 2 Fe(II)-[cytochrome b5] + O2 + 2 H(+) = a (9Z,11E,13E,15Z)-octadecatetraenoyl-containing glycerolipid + 2 Fe(III)-[cytochrome b5] + 2 H2O. The protein operates within lipid metabolism; polyunsaturated fatty acid biosynthesis. In terms of biological role, converts linoleic acid to alpha-eleostearic acid (18:3(9Z,11E,13E)) and alpha-linolenic acid to alpha-parinaric acid (18:4(9Z,11E, 13E, 15Z)). Converts a single cis double bond at carbon 12 to two conjugated trans bonds at positions 11 and 13. This chain is Delta(12) acyl-lipid conjugase (11E,13E-forming), found in Impatiens balsamina (Balsam).